A 265-amino-acid chain; its full sequence is Signal peptidase I (265 aa).

Residues 1-19 lie on the Cytoplasmic side of the membrane; it reads MQIDTKTNTNKTTAQEWKS. A helical membrane pass occupies residues 20 to 40; the sequence is FAFVVCIALLIRILIMEPFTV. Topologically, residues 41 to 265 are periplasmic; it reads PTGSMKATIL…IFRNLYNTDE (225 aa). Catalysis depends on residues serine 44 and lysine 107.

It belongs to the peptidase S26 family.

The protein localises to the cell inner membrane. It carries out the reaction Cleavage of hydrophobic, N-terminal signal or leader sequences from secreted and periplasmic proteins.. The sequence is that of Signal peptidase I (lepB) from Rickettsia canadensis (strain McKiel).